A 963-amino-acid polypeptide reads, in one-letter code: Transcription factor cbf12 (963 aa).

Disordered regions lie at residues 130 to 207 (NPSN…SQGL) and 248 to 289 (VNMN…PPQK). Polar residues-rich tracts occupy residues 143–207 (FENN…SQGL) and 249–289 (NMNS…PPQK).

Belongs to the Su(H) family.

It is found in the nucleus. Its function is as follows. Transcription factor which function may be to trigger the increase of adhesion at stationary phase, possibly by counteracting or replacing cbf11 at the respective promoters. May also play a cbf11-antagonistic role in the regulation of a number of other important processes such as extracellular material production, colony morphogenesis, ploidy maintenance, or meiosis. This chain is Transcription factor cbf12 (cbf12), found in Schizosaccharomyces pombe (strain 972 / ATCC 24843) (Fission yeast).